The primary structure comprises 300 residues: Transcription elongation factor A protein 2 (300 aa).

Residues 6–83 (EEIARIARRL…KSWKKLLDAS (78 aa)) form the TFIIS N-terminal domain. Residue lysine 58 forms a Glycyl lysine isopeptide (Lys-Gly) (interchain with G-Cter in ubiquitin) linkage. Residues serine 60 and serine 101 each carry the phosphoserine modification. Residues 84–131 (DAKARERRRGGSLPTSSSKEASEAQDPSRKRPELPRMPSTPRITTFPP) form a disordered region. Over residues 103–117 (EASEAQDPSRKRPEL) the composition is skewed to basic and acidic residues. Residues 139-255 (VRTKCREMLT…EHQMARTGGT (117 aa)) enclose the TFIIS central domain. The segment at 258-298 (DLFTCGKCRKKNCTYTQVQTRSSDEPMTTFVVCNECGNRWK) adopts a TFIIS-type zinc-finger fold. Cysteine 262, cysteine 265, cysteine 290, and cysteine 293 together coordinate Zn(2+).

Belongs to the TFS-II family. As to quaternary structure, interacts with the basal transcription factor GTF2B. Interacts with REXO1.

The protein localises to the nucleus. Necessary for efficient RNA polymerase II transcription elongation past template-encoded arresting sites. The arresting sites in DNA have the property of trapping a certain fraction of elongating RNA polymerases that pass through, resulting in locked ternary complexes. Cleavage of the nascent transcript by S-II allows the resumption of elongation from the new 3'-terminus. The polypeptide is Transcription elongation factor A protein 2 (TCEA2) (Bos taurus (Bovine)).